Reading from the N-terminus, the 906-residue chain is Aconitate hydratase A (906 aa).

Residues Cys-443, Cys-509, and Cys-512 each coordinate [4Fe-4S] cluster.

It belongs to the aconitase/IPM isomerase family. As to quaternary structure, monomer. [4Fe-4S] cluster is required as a cofactor.

The catalysed reaction is citrate = D-threo-isocitrate. The enzyme catalyses (2S,3R)-3-hydroxybutane-1,2,3-tricarboxylate = 2-methyl-cis-aconitate + H2O. It participates in carbohydrate metabolism; tricarboxylic acid cycle; isocitrate from oxaloacetate: step 2/2. Its pathway is organic acid metabolism; propanoate degradation. Functionally, involved in the catabolism of short chain fatty acids (SCFA) via the tricarboxylic acid (TCA)(acetyl degradation route) and probably via the 2-methylcitrate cycle I (propionate degradation route). Catalyzes the reversible isomerization of citrate to isocitrate via cis-aconitate. Could catalyze the hydration of 2-methyl-cis-aconitate to yield (2R,3S)-2-methylisocitrate. The apo form of AcnA functions as a RNA-binding regulatory protein. The polypeptide is Aconitate hydratase A (Bradyrhizobium diazoefficiens (strain JCM 10833 / BCRC 13528 / IAM 13628 / NBRC 14792 / USDA 110)).